A 341-amino-acid polypeptide reads, in one-letter code: 4-(gamma-L-glutamylamino)butanoyl-[BtrI acyl-carrier protein] monooxygenase BtrO (341 aa).

This sequence belongs to the bacterial luciferase oxidoreductase family.

It carries out the reaction 4-(gamma-L-glutamylamino)butanoyl-[BtrI ACP] + FMNH2 + O2 = 4-(gamma-L-glutamylamino)-(2S)-2-hydroxybutanoyl-[BtrI ACP] + FMN + H2O + H(+). It functions in the pathway antibiotic biosynthesis; butirosin biosynthesis. Monooxygenase component of a two-component system involved in the biosynthesis of the side chain of the aminoglycoside antibiotics in the biosynthetic pathway of butirosin. Together with BtrV, mediates hydroxylation of gamma-L-Glu-GABA-S-BtrI. Not able to hydroxylate free substrates, activation by the acyl-carrier protein is mandatory. Octanoyl-S-[BtrI acyl-carrier protein] is also accepted as substrate. In Niallia circulans (Bacillus circulans), this protein is 4-(gamma-L-glutamylamino)butanoyl-[BtrI acyl-carrier protein] monooxygenase BtrO (btrO).